The following is a 501-amino-acid chain: UDP-N-acetylmuramoyl-L-alanyl-D-glutamate--2,6-diaminopimelate ligase (501 aa).

Serine 29 contacts UDP-N-acetyl-alpha-D-muramoyl-L-alanyl-D-glutamate. 112-118 lines the ATP pocket; sequence GTNGKTS. Residues 161-162, serine 188, and arginine 196 each bind UDP-N-acetyl-alpha-D-muramoyl-L-alanyl-D-glutamate; that span reads TT. Lysine 228 carries the N6-carboxylysine modification. Residues arginine 393, 417–420, glycine 468, and glutamate 472 each bind meso-2,6-diaminopimelate; that span reads DNPR. Residues 417 to 420 carry the Meso-diaminopimelate recognition motif motif; the sequence is DNPR.

It belongs to the MurCDEF family. MurE subfamily. The cofactor is Mg(2+). In terms of processing, carboxylation is probably crucial for Mg(2+) binding and, consequently, for the gamma-phosphate positioning of ATP.

The protein resides in the cytoplasm. The enzyme catalyses UDP-N-acetyl-alpha-D-muramoyl-L-alanyl-D-glutamate + meso-2,6-diaminopimelate + ATP = UDP-N-acetyl-alpha-D-muramoyl-L-alanyl-gamma-D-glutamyl-meso-2,6-diaminopimelate + ADP + phosphate + H(+). It functions in the pathway cell wall biogenesis; peptidoglycan biosynthesis. Its function is as follows. Catalyzes the addition of meso-diaminopimelic acid to the nucleotide precursor UDP-N-acetylmuramoyl-L-alanyl-D-glutamate (UMAG) in the biosynthesis of bacterial cell-wall peptidoglycan. The chain is UDP-N-acetylmuramoyl-L-alanyl-D-glutamate--2,6-diaminopimelate ligase from Acidovorax sp. (strain JS42).